Consider the following 98-residue polypeptide: DNA-binding protein Fis (98 aa).

The segment at residues 74-93 is a DNA-binding region (H-T-H motif); it reads QTRAALMMGINRGTLRKKLK.

Belongs to the transcriptional regulatory Fis family. Homodimer.

Its function is as follows. Activates ribosomal RNA transcription. Plays a direct role in upstream activation of rRNA promoters. In Photorhabdus laumondii subsp. laumondii (strain DSM 15139 / CIP 105565 / TT01) (Photorhabdus luminescens subsp. laumondii), this protein is DNA-binding protein Fis.